Consider the following 71-residue polypeptide: Cruzioseptin-2 (71 aa).

Positions 1-22 (MAFLKKSLFLVLFLGLVSLSIC) are cleaved as a signal peptide. The propeptide occupies 23–43 (EEEKREEENEEVQEDDDQSEE). Gln-68 bears the Glutamine amide mark. Residues 70–71 (EQ) constitute a propeptide that is removed on maturation.

In terms of tissue distribution, expressed by the skin glands.

It is found in the secreted. Its function is as follows. Has antimicrobial activity against Gram-negative bacterium E.coli (MIC=26.35 uM), against Gram-positive bacterium S.aureus (MIC=6.59 uM) and against fungus C.albicans (MIC=13.18 uM). At higher concentrations also has a bactericidal and fungicidal effect. Has hemagglutinating activity against horse erythrocytes. The protein is Cruzioseptin-2 of Cruziohyla calcarifer (Splendid leaf frog).